The following is a 430-amino-acid chain: Tyrosine--tRNA ligase (430 aa).

Y36 contacts L-tyrosine. Positions 41–50 (PTASSLHVGS) match the 'HIGH' region motif. Y170 and Q174 together coordinate L-tyrosine. Residues 230 to 234 (KMGKT) carry the 'KMSKS' region motif. K233 is a binding site for ATP. The region spanning 362–427 (VPAFELFDEI…GKKNYHRLVL (66 aa)) is the S4 RNA-binding domain.

It belongs to the class-I aminoacyl-tRNA synthetase family. TyrS type 1 subfamily. As to quaternary structure, homodimer.

Its subcellular location is the cytoplasm. It carries out the reaction tRNA(Tyr) + L-tyrosine + ATP = L-tyrosyl-tRNA(Tyr) + AMP + diphosphate + H(+). Functionally, catalyzes the attachment of tyrosine to tRNA(Tyr) in a two-step reaction: tyrosine is first activated by ATP to form Tyr-AMP and then transferred to the acceptor end of tRNA(Tyr). The protein is Tyrosine--tRNA ligase of Desulfatibacillum aliphaticivorans.